The chain runs to 266 residues: Small ribosomal subunit protein uS3m (266 aa).

The protein belongs to the universal ribosomal protein uS3 family.

The protein localises to the mitochondrion. This is Small ribosomal subunit protein uS3m (MRPS3) from Mycosarcoma maydis (Corn smut fungus).